Consider the following 368-residue polypeptide: Solute carrier family 35 member G1 (368 aa).

Helical transmembrane passes span 72 to 92, 100 to 120, 134 to 154, 161 to 181, 190 to 210, 225 to 245, 256 to 276, 289 to 309, 316 to 336, and 340 to 360; these read GLGLFYTVLSAFLFSVASLFV, AVEISAFRCVVQMLVIIPCLI, LFLFLRGVFGSSAMILMYYAF, DATVIAFSCPVFTSIFAWIFL, AFFTLFAIAGVILIVRPPFIF, IKGTFAAIGHAVLAAITLVIL, LSIWYYVILGLPEAIIILFVI, LFLILIGLLGLGGQIFITKAV, LVAIMKTMDIVFAFIFQIAFF, and PTWWTVGGALCVVVSTTGATI. EamA domains are found at residues 83 to 205 and 236 to 360; these read FLFS…LIVR and VLAA…GATI.

This sequence belongs to the TMEM20 family. Interacts with STIM1; stimulated by depletion of intracellular calcium. Interacts with ORAI1. Interacts with the plasma membrane calcium-transporting ATPases ATP2B1 and ATP2B4. Interacts with ATP1A1, ATP2A2, KPNB1 and XPO1.

The protein localises to the cell membrane. It localises to the endoplasmic reticulum membrane. Its function is as follows. May play a role in intracellular calcium sensing and homeostasis. May act as a negative regulator of plasma membrane calcium-transporting ATPases preventing calcium efflux from the cell. This Mus musculus (Mouse) protein is Solute carrier family 35 member G1 (Slc35g1).